Reading from the N-terminus, the 286-residue chain is Protein HEAT-STRESS-ASSOCIATED 32 (286 aa).

The protein belongs to the phosphosulfolactate synthase family.

Functionally, transactivator required, together with HSP101, for long-term acquired thermotolerance (LAT) maintenance, probably by regulating heat-inducible genes expression, thus being a cellular component of thermomemory. The protein is Protein HEAT-STRESS-ASSOCIATED 32 of Arabidopsis thaliana (Mouse-ear cress).